Consider the following 961-residue polypeptide: Aconitate hydratase A (961 aa).

The [4Fe-4S] cluster site is built by cysteine 499, cysteine 565, and cysteine 568.

Belongs to the aconitase/IPM isomerase family. In terms of assembly, monomer. It depends on [4Fe-4S] cluster as a cofactor.

It carries out the reaction citrate = D-threo-isocitrate. It catalyses the reaction (2S,3R)-3-hydroxybutane-1,2,3-tricarboxylate = 2-methyl-cis-aconitate + H2O. It participates in carbohydrate metabolism; tricarboxylic acid cycle; isocitrate from oxaloacetate: step 2/2. The protein operates within organic acid metabolism; propanoate degradation. In terms of biological role, involved in the catabolism of short chain fatty acids (SCFA) via the tricarboxylic acid (TCA)(acetyl degradation route) and probably via the 2-methylcitrate cycle I (propionate degradation route). Catalyzes the reversible isomerization of citrate to isocitrate via cis-aconitate. The apo form of AcnA functions as a RNA-binding regulatory protein. Could catalyze the hydration of 2-methyl-cis-aconitate to yield (2R,3S)-2-methylisocitrate. The sequence is that of Aconitate hydratase A (acn) from Mycobacterium avium.